Reading from the N-terminus, the 108-residue chain is DNA-binding protein HBbu (108 aa).

This sequence belongs to the bacterial histone-like protein family.

Histone-like DNA-binding protein which is capable of wrapping DNA to stabilize it, and thus to prevent its denaturation under extreme environmental conditions. The chain is DNA-binding protein HBbu (hbb) from Borrelia garinii subsp. bavariensis (strain ATCC BAA-2496 / DSM 23469 / PBi) (Borreliella bavariensis).